The following is a 502-amino-acid chain: Cytochrome P450 71B20 (502 aa).

Residues 1-21 traverse the membrane as a helical segment; the sequence is MAISFLCFCLITLASLIFFAK. Residue cysteine 444 coordinates heme.

Belongs to the cytochrome P450 family. Heme is required as a cofactor.

It is found in the membrane. This Arabidopsis thaliana (Mouse-ear cress) protein is Cytochrome P450 71B20 (CYP71B20).